Reading from the N-terminus, the 55-residue chain is UPF0291 protein CA_C2726 (55 aa).

Belongs to the UPF0291 family.

Its subcellular location is the cytoplasm. In Clostridium acetobutylicum (strain ATCC 824 / DSM 792 / JCM 1419 / IAM 19013 / LMG 5710 / NBRC 13948 / NRRL B-527 / VKM B-1787 / 2291 / W), this protein is UPF0291 protein CA_C2726.